The following is a 90-amino-acid chain: Guanine nucleotide-binding protein subunit gamma (90 aa).

Residue Cys-86 is the site of S-palmitoyl cysteine attachment. Residue Cys-87 is modified to Cysteine methyl ester. Cys-87 is lipidated: S-farnesyl cysteine. The propeptide at Cys-88–Met-90 is removed in mature form.

It belongs to the G protein gamma family. In terms of assembly, g proteins are composed of 3 units, alpha, beta and gamma.

Its subcellular location is the membrane. This is Guanine nucleotide-binding protein subunit gamma from Eremothecium gossypii (strain ATCC 10895 / CBS 109.51 / FGSC 9923 / NRRL Y-1056) (Yeast).